Here is a 242-residue protein sequence, read N- to C-terminus: Protein odd-skipped-related 1 (242 aa).

C2H2-type zinc fingers lie at residues 128-150 (FICKYCARHFTKSYNLMIHERTH), 156-178 (FHCETCGKSFRRQDHLRDHKYIH), and 184-207 (HKCEICGKGFCQLRTLNVHRSCHH).

This sequence belongs to the Odd C2H2-type zinc-finger protein family.

It is found in the nucleus. May function as transcription regulator. Essential for larval development. Required for morphogenesis and function of the digestive tract. This Caenorhabditis elegans protein is Protein odd-skipped-related 1.